The following is a 306-amino-acid chain: 4-hydroxy-tetrahydrodipicolinate synthase (306 aa).

Residue Thr-49 coordinates pyruvate. Tyr-136 acts as the Proton donor/acceptor in catalysis. The active-site Schiff-base intermediate with substrate is the Lys-164. Ile-207 is a pyruvate binding site.

It belongs to the DapA family. Homotetramer; dimer of dimers.

The protein resides in the cytoplasm. It catalyses the reaction L-aspartate 4-semialdehyde + pyruvate = (2S,4S)-4-hydroxy-2,3,4,5-tetrahydrodipicolinate + H2O + H(+). The protein operates within amino-acid biosynthesis; L-lysine biosynthesis via DAP pathway; (S)-tetrahydrodipicolinate from L-aspartate: step 3/4. Catalyzes the condensation of (S)-aspartate-beta-semialdehyde [(S)-ASA] and pyruvate to 4-hydroxy-tetrahydrodipicolinate (HTPA). This Haloarcula marismortui (strain ATCC 43049 / DSM 3752 / JCM 8966 / VKM B-1809) (Halobacterium marismortui) protein is 4-hydroxy-tetrahydrodipicolinate synthase.